The sequence spans 158 residues: 6,7-dimethyl-8-ribityllumazine synthase (158 aa).

5-amino-6-(D-ribitylamino)uracil is bound by residues phenylalanine 23, 61–63, and 85–87; these read SFE and AVI. 90–91 serves as a coordination point for (2S)-2-hydroxy-3-oxobutyl phosphate; sequence DT. The active-site Proton donor is histidine 93. Position 118 (phenylalanine 118) interacts with 5-amino-6-(D-ribitylamino)uracil. Arginine 132 contributes to the (2S)-2-hydroxy-3-oxobutyl phosphate binding site.

It belongs to the DMRL synthase family.

The enzyme catalyses (2S)-2-hydroxy-3-oxobutyl phosphate + 5-amino-6-(D-ribitylamino)uracil = 6,7-dimethyl-8-(1-D-ribityl)lumazine + phosphate + 2 H2O + H(+). It participates in cofactor biosynthesis; riboflavin biosynthesis; riboflavin from 2-hydroxy-3-oxobutyl phosphate and 5-amino-6-(D-ribitylamino)uracil: step 1/2. Catalyzes the formation of 6,7-dimethyl-8-ribityllumazine by condensation of 5-amino-6-(D-ribitylamino)uracil with 3,4-dihydroxy-2-butanone 4-phosphate. This is the penultimate step in the biosynthesis of riboflavin. This chain is 6,7-dimethyl-8-ribityllumazine synthase, found in Prochlorococcus marinus (strain NATL1A).